Here is a 420-residue protein sequence, read N- to C-terminus: Dynein axonemal assembly factor 4 (420 aa).

A CS domain is found at 3-87 (VRVSEFSWQQ…KEPVLWESLS (85 aa)). Residues 7–103 (EFSWQQTPAA…EMMQRIREKS (97 aa)) form a mediates interaction with ESR1 and STUB1 region. Residues 165 to 192 (CQKKADGQKRVQRKEKPLQGKQAEERGA) are compositionally biased toward basic and acidic residues. The disordered stretch occupies residues 165-212 (CQKKADGQKRVQRKEKPLQGKQAEERGALKPQSLPRKAPPTRLPTRGR). TPR repeat units lie at residues 288–321 (PDWLKDKGNKLFATENYLAAIDAYNLAIRLNRKI), 323–355 (VLYLNRAACHLKLKNLHKAIEDSSKALELLTPP), and 364–397 (MKAHVRRGTAFCQLELYVEGLQDYEAALKIDPAN).

As to quaternary structure, interacts with ZMYND10. Interacts with STUB1. Interacts with ESR1 and ESR2. Interacts with DNAAF2. Interacts with CCT3, CCT4, CCT5 and CCT8. Interacts with DNAAF6/PIH1D3.

It is found in the nucleus. The protein localises to the cytoplasm. The protein resides in the cell projection. Its subcellular location is the neuron projection. It localises to the dynein axonemal particle. Functionally, involved in neuronal migration during development of the cerebral neocortex. May regulate the stability and proteasomal degradation of the estrogen receptors that play an important role in neuronal differentiation, survival and plasticity. Axonemal dynein assembly factor required for ciliary motility. This chain is Dynein axonemal assembly factor 4, found in Rattus norvegicus (Rat).